Here is a 416-residue protein sequence, read N- to C-terminus: Putative nucleoside permease NupX (416 aa).

Residues 1–2 (MD) are Periplasmic-facing. Residues 3 to 23 (VMRSVLGMVVLLTIAFLLSVN) traverse the membrane as a helical segment. At 24-31 (KKKISLRT) the chain is on the cytoplasmic side. A helical membrane pass occupies residues 32 to 52 (VGAALVLQVVIGGIMLWLPPG). Over 53–95 (RWVAEKVAFGVHKVMAYSDAGSAFIFGSLVGPKMDTLFDGAGF) the chain is Periplasmic. Residues 96–118 (IFGFRVLPAIIFVTALVSILYYI) traverse the membrane as a helical segment. Residues 119–172 (GVMGILIRILGGIFQKALNISKIESFVAVTTIFLGQNEIPAIVKPFIDRLNRNE) are Cytoplasmic-facing. The chain crosses the membrane as a helical span at residues 173 to 193 (LFTAICSGMASIAGSTMIGYA). Residues 194–196 (ALG) lie on the Periplasmic side of the membrane. A helical transmembrane segment spans residues 197 to 217 (VPVEYLLAASLMAIPGGILFA). Topologically, residues 218-246 (RLLSPATESSQVSFNNLSFTETPPKSIIE) are cytoplasmic. Residues 247–267 (AAATGAMTGLKIAAGVATVVM) traverse the membrane as a helical segment. Topologically, residues 268–352 (AFVAIIALIN…QTAGTLDAKT (85 aa)) are periplasmic. The chain crosses the membrane as a helical span at residues 353 to 373 (VAIISFALCGFANFGSIGVVV). Residues 374 to 394 (GAFSAVAPHRAPEIAQLGLRA) lie on the Cytoplasmic side of the membrane. A helical transmembrane segment spans residues 395-415 (LAAATLSNLMSATIAGFFIGL). Ala-416 is a topological domain (periplasmic).

The protein belongs to the concentrative nucleoside transporter (CNT) (TC 2.A.41) family.

The protein resides in the cell inner membrane. The sequence is that of Putative nucleoside permease NupX (nupX) from Escherichia coli (strain K12).